The sequence spans 381 residues: Dual-specificity RNA methyltransferase RlmN (381 aa).

E95 acts as the Proton acceptor in catalysis. One can recognise a Radical SAM core domain in the interval 101–339; that stretch reads DGRRGTLCVS…MTTVRTTRGD (239 aa). A disulfide bond links C108 and C345. Residues C115, C119, and C122 each contribute to the [4Fe-4S] cluster site. S-adenosyl-L-methionine is bound by residues 169 to 170, S201, 223 to 225, and N302; these read GE and SLH. C345 functions as the S-methylcysteine intermediate in the catalytic mechanism.

Belongs to the radical SAM superfamily. RlmN family. It depends on [4Fe-4S] cluster as a cofactor.

The protein resides in the cytoplasm. It catalyses the reaction adenosine(2503) in 23S rRNA + 2 reduced [2Fe-2S]-[ferredoxin] + 2 S-adenosyl-L-methionine = 2-methyladenosine(2503) in 23S rRNA + 5'-deoxyadenosine + L-methionine + 2 oxidized [2Fe-2S]-[ferredoxin] + S-adenosyl-L-homocysteine. The enzyme catalyses adenosine(37) in tRNA + 2 reduced [2Fe-2S]-[ferredoxin] + 2 S-adenosyl-L-methionine = 2-methyladenosine(37) in tRNA + 5'-deoxyadenosine + L-methionine + 2 oxidized [2Fe-2S]-[ferredoxin] + S-adenosyl-L-homocysteine. Its function is as follows. Specifically methylates position 2 of adenine 2503 in 23S rRNA and position 2 of adenine 37 in tRNAs. m2A2503 modification seems to play a crucial role in the proofreading step occurring at the peptidyl transferase center and thus would serve to optimize ribosomal fidelity. This Alcanivorax borkumensis (strain ATCC 700651 / DSM 11573 / NCIMB 13689 / SK2) protein is Dual-specificity RNA methyltransferase RlmN.